The sequence spans 217 residues: ATP phosphoribosyltransferase (217 aa).

It belongs to the ATP phosphoribosyltransferase family. Short subfamily. As to quaternary structure, heteromultimer composed of HisG and HisZ subunits.

It is found in the cytoplasm. The enzyme catalyses 1-(5-phospho-beta-D-ribosyl)-ATP + diphosphate = 5-phospho-alpha-D-ribose 1-diphosphate + ATP. It functions in the pathway amino-acid biosynthesis; L-histidine biosynthesis; L-histidine from 5-phospho-alpha-D-ribose 1-diphosphate: step 1/9. Its function is as follows. Catalyzes the condensation of ATP and 5-phosphoribose 1-diphosphate to form N'-(5'-phosphoribosyl)-ATP (PR-ATP). Has a crucial role in the pathway because the rate of histidine biosynthesis seems to be controlled primarily by regulation of HisG enzymatic activity. The protein is ATP phosphoribosyltransferase of Burkholderia lata (strain ATCC 17760 / DSM 23089 / LMG 22485 / NCIMB 9086 / R18194 / 383).